Consider the following 323-residue polypeptide: Thymidine kinase (323 aa).

11 to 18 (GPHGLGKT) provides a ligand contact to ATP. The Proton acceptor role is filled by Glu-36. Residues Tyr-54 and Gln-78 each coordinate substrate. Arg-169 is a binding site for ATP. Arg-175 is a binding site for substrate.

This sequence belongs to the herpesviridae thymidine kinase family. As to quaternary structure, homodimer.

The enzyme catalyses thymidine + ATP = dTMP + ADP + H(+). Functionally, catalyzes the transfer of the gamma-phospho group of ATP to thymidine to generate dTMP in the salvage pathway of pyrimidine synthesis. The dTMP serves as a substrate for DNA polymerase during viral DNA replication. Allows the virus to be reactivated and to grow in non-proliferative cells lacking a high concentration of phosphorylated nucleic acid precursors. The chain is Thymidine kinase from Bos taurus (Bovine).